The chain runs to 719 residues: Endonuclease MutS2 (719 aa).

ATP is bound at residue 273–280 (GPNTGGKT). In terms of domain architecture, Smr spans 644-719 (LDLRGYRYED…GFGVTVATLK (76 aa)).

It belongs to the DNA mismatch repair MutS family. MutS2 subfamily. In terms of assembly, homodimer. Binds to stalled ribosomes, contacting rRNA.

Its function is as follows. Endonuclease that is involved in the suppression of homologous recombination and thus may have a key role in the control of bacterial genetic diversity. Acts as a ribosome collision sensor, splitting the ribosome into its 2 subunits. Detects stalled/collided 70S ribosomes which it binds and splits by an ATP-hydrolysis driven conformational change. Acts upstream of the ribosome quality control system (RQC), a ribosome-associated complex that mediates the extraction of incompletely synthesized nascent chains from stalled ribosomes and their subsequent degradation. Probably generates substrates for RQC. The protein is Endonuclease MutS2 of Staphylococcus aureus.